The primary structure comprises 177 residues: Secretion monitor (177 aa).

Positions 1 to 30 (MIGILNRWRQFGRRYFWPHLLLGMVAASLG) are cleaved as a signal peptide.

It belongs to the SecM family.

Its subcellular location is the cytoplasm. The protein resides in the cytosol. It localises to the periplasm. In terms of biological role, regulates secA expression by translational coupling of the secM secA operon. Translational pausing at a specific Pro residue 5 residues before the end of the protein may allow disruption of a mRNA repressor helix that normally suppresses secA translation initiation. This is Secretion monitor from Yersinia enterocolitica serotype O:8 / biotype 1B (strain NCTC 13174 / 8081).